A 308-amino-acid chain; its full sequence is Prephenate dehydratase (308 aa).

The region spanning 3–187 (RITYLGPEGT…AHTRFVLVGR (185 aa)) is the Prephenate dehydratase domain. Residues 201–278 (SVVLGLGNVP…EDVRYLGSWP (78 aa)) enclose the ACT domain.

As to quaternary structure, homodimer.

It catalyses the reaction prephenate + H(+) = 3-phenylpyruvate + CO2 + H2O. Its pathway is amino-acid biosynthesis; L-phenylalanine biosynthesis; phenylpyruvate from prephenate: step 1/1. The protein is Prephenate dehydratase (pheA) of Mycobacteroides abscessus (strain ATCC 19977 / DSM 44196 / CCUG 20993 / CIP 104536 / JCM 13569 / NCTC 13031 / TMC 1543 / L948) (Mycobacterium abscessus).